The following is a 200-amino-acid chain: 3-isopropylmalate dehydratase small subunit (200 aa).

It belongs to the LeuD family. LeuD type 1 subfamily. Heterodimer of LeuC and LeuD.

It catalyses the reaction (2R,3S)-3-isopropylmalate = (2S)-2-isopropylmalate. It functions in the pathway amino-acid biosynthesis; L-leucine biosynthesis; L-leucine from 3-methyl-2-oxobutanoate: step 2/4. In terms of biological role, catalyzes the isomerization between 2-isopropylmalate and 3-isopropylmalate, via the formation of 2-isopropylmaleate. The polypeptide is 3-isopropylmalate dehydratase small subunit (Vibrio vulnificus (strain CMCP6)).